The sequence spans 516 residues: NADH-quinone oxidoreductase subunit N (516 aa).

The next 14 membrane-spanning stretches (helical) occupy residues 12-32, 37-57, 81-101, 108-128, 131-151, 163-183, 213-233, 246-266, 274-294, 303-323, 341-361, 386-406, 419-439, and 491-511; these read LLPA…DLLV, VTIS…VLVG, LVAV…GPLL, VGEY…LGAA, LITL…LVGL, VTFF…AALL, VAVA…PFHA, VAAY…LAVV, ITGL…NLVA, LLAW…GALA, VAYT…VVAL, VGLA…AGLF, GAAG…AYYL, and VVLA…QLVL.

The protein belongs to the complex I subunit 2 family. As to quaternary structure, NDH-1 is composed of 14 different subunits. Subunits NuoA, H, J, K, L, M, N constitute the membrane sector of the complex.

It is found in the cell membrane. The enzyme catalyses a quinone + NADH + 5 H(+)(in) = a quinol + NAD(+) + 4 H(+)(out). Its function is as follows. NDH-1 shuttles electrons from NADH, via FMN and iron-sulfur (Fe-S) centers, to quinones in the respiratory chain. The immediate electron acceptor for the enzyme in this species is believed to be a menaquinone. Couples the redox reaction to proton translocation (for every two electrons transferred, four hydrogen ions are translocated across the cytoplasmic membrane), and thus conserves the redox energy in a proton gradient. The protein is NADH-quinone oxidoreductase subunit N of Salinispora tropica (strain ATCC BAA-916 / DSM 44818 / JCM 13857 / NBRC 105044 / CNB-440).